Here is a 438-residue protein sequence, read N- to C-terminus: 23S rRNA (uracil(1939)-C(5))-methyltransferase RlmD (438 aa).

Residues 13-71 (KAPLGPMQTYLVEGLTHEAKGVARLNGKVTFIEGALPGETVTAQVNKPGRRFDEAVLNA) enclose the TRAM domain. Positions 84, 90, 93, and 167 each coordinate [4Fe-4S] cluster. Residues Gln271, Phe300, Asn305, Glu321, Asp348, and Asp368 each coordinate S-adenosyl-L-methionine. Cys394 serves as the catalytic Nucleophile.

This sequence belongs to the class I-like SAM-binding methyltransferase superfamily. RNA M5U methyltransferase family. RlmD subfamily.

It carries out the reaction uridine(1939) in 23S rRNA + S-adenosyl-L-methionine = 5-methyluridine(1939) in 23S rRNA + S-adenosyl-L-homocysteine + H(+). In terms of biological role, catalyzes the formation of 5-methyl-uridine at position 1939 (m5U1939) in 23S rRNA. In Marinomonas posidonica (strain CECT 7376 / NCIMB 14433 / IVIA-Po-181), this protein is 23S rRNA (uracil(1939)-C(5))-methyltransferase RlmD.